The following is a 62-amino-acid chain: Large ribosomal subunit protein bL28 (62 aa).

It belongs to the bacterial ribosomal protein bL28 family.

The polypeptide is Large ribosomal subunit protein bL28 (Bacillus velezensis (strain DSM 23117 / BGSC 10A6 / LMG 26770 / FZB42) (Bacillus amyloliquefaciens subsp. plantarum)).